The sequence spans 656 residues: Macrolide export ATP-binding/permease protein MacB (656 aa).

The ABC transporter domain occupies 6-244; that stretch reads LEVSACYRSF…VKAQVDMSLA (239 aa). 42-49 serves as a coordination point for ATP; the sequence is GASGSGKS. A run of 4 helical transmembrane segments spans residues 277 to 297, 531 to 551, 586 to 606, and 621 to 641; these read FLTM…VALG, LLIS…VMNI, LVCL…GVVF, and SIVA…FLPA.

This sequence belongs to the ABC transporter superfamily. Macrolide exporter (TC 3.A.1.122) family. In terms of assembly, homodimer. Part of the tripartite efflux system MacAB-TolC, which is composed of an inner membrane transporter, MacB, a periplasmic membrane fusion protein, MacA, and an outer membrane component, TolC. The complex forms a large protein conduit and can translocate molecules across both the inner and outer membranes. Interacts with MacA.

The protein localises to the cell inner membrane. Part of the tripartite efflux system MacAB-TolC. MacB is a non-canonical ABC transporter that contains transmembrane domains (TMD), which form a pore in the inner membrane, and an ATP-binding domain (NBD), which is responsible for energy generation. Confers resistance against macrolides. The protein is Macrolide export ATP-binding/permease protein MacB of Shewanella oneidensis (strain ATCC 700550 / JCM 31522 / CIP 106686 / LMG 19005 / NCIMB 14063 / MR-1).